Reading from the N-terminus, the 342-residue chain is Ferredoxin--NADP reductase (342 aa).

The FAD site is built by Cys-17, Asp-36, Gln-44, Tyr-49, Val-89, Phe-124, Asp-289, and Thr-330.

It belongs to the ferredoxin--NADP reductase type 2 family. Homodimer. FAD serves as cofactor.

It carries out the reaction 2 reduced [2Fe-2S]-[ferredoxin] + NADP(+) + H(+) = 2 oxidized [2Fe-2S]-[ferredoxin] + NADPH. The polypeptide is Ferredoxin--NADP reductase (Bradyrhizobium sp. (strain ORS 278)).